Here is a 417-residue protein sequence, read N- to C-terminus: Acetyltransferase nanB (417 aa).

An N-terminal signal peptide occupies residues 1–24; it reads MRPSTTTLSLLVFLISSILLATTG. The next 5 membrane-spanning stretches (helical) occupy residues 150–170, 284–304, 307–327, 356–376, and 389–409; these read LAVS…LKNI, YLNN…FNWI, VQDG…GYFL, VGAL…VYPF, and FVDV…AAAL.

Belongs to the wax synthase family.

The protein localises to the membrane. The protein operates within secondary metabolite biosynthesis. In terms of biological role, acetyltransferase; part of the gene cluster that mediates the biosynthesis of the benzazepine alkaloid nanangelenin A which contains an unprecedented 3,4-dihydro-1-benzazepine-2,5-dione-N-prenyl-N-acetoxy-anthranilamide scaffold. The first step of nanangelenin biosynthesis is catalyzed by the indoleamine 2,3-dioxygenase nanC which produces N-formyl-kynurenine through the catabolism of tryptophan. The two-module NRPS nanA then utilizes anthranilate (Ant) and L-kynurenine (L-Kyn) to assemble the dipeptide product nanangelenin B. The first adenylation domain of nanA (A1) loads anthranilate onto the T1 domain, while A2 loads kynurenine, generated through spontaneous nonenzymatic deformylation of the nanC-supplied N-formyl-kynurenine. The peptide bond formation between the tethered amino acids is catalyzed by the first condensation domain (C1) between anthranilate's carbonyl carbon and kynurenine's aliphatic primary amine. The second C domain (C2) catalyzes the final cyclization event between the aromatic amine of kynurenine and the tethered carbonyl carbon, yielding nanangelenin B. The terminal T3 domain enhances the catalytic efficiency of C2, suggesting the T2-tethered Ant-L-Kyn is transferred to T3 prior to cyclization by C2. Once released from nanA, nanangelenin B is then prenylated by the prenyltransferase nanD to form nanangelenin C. Nanangelenin C is then N-hydroxylated by the FAD-dependent monooxygenase nanF and further acetylated by the acetyltransferase nanB to yield nanangelenin F. Finally, the N-methyltransferase nanE methylates the amide nitrogen of 1-benzazepine to convert nanangelenin F into nanangelenin A. NanE is also able to methylate most of the intermediates of the pathway such as nanangelenin B and nanangelenin C to produce nanangelenin D and nanangelenin E, respectively. This chain is Acetyltransferase nanB, found in Aspergillus nanangensis.